The chain runs to 602 residues: Elongation factor 4 (602 aa).

The 183-residue stretch at 7 to 189 (SKIRNFCIIA…AVVSRIPHPQ (183 aa)) folds into the tr-type G domain. GTP is bound by residues 19–24 (DHGKST) and 136–139 (NKVD).

The protein belongs to the TRAFAC class translation factor GTPase superfamily. Classic translation factor GTPase family. LepA subfamily.

The protein resides in the cell inner membrane. It catalyses the reaction GTP + H2O = GDP + phosphate + H(+). In terms of biological role, required for accurate and efficient protein synthesis under certain stress conditions. May act as a fidelity factor of the translation reaction, by catalyzing a one-codon backward translocation of tRNAs on improperly translocated ribosomes. Back-translocation proceeds from a post-translocation (POST) complex to a pre-translocation (PRE) complex, thus giving elongation factor G a second chance to translocate the tRNAs correctly. Binds to ribosomes in a GTP-dependent manner. In Prochlorococcus marinus subsp. pastoris (strain CCMP1986 / NIES-2087 / MED4), this protein is Elongation factor 4.